A 345-amino-acid chain; its full sequence is GTP 3',8-cyclase (345 aa).

Positions 10–236 constitute a Radical SAM core domain; that stretch reads SHGRPLGVLR…QCVSSHWPLD (227 aa). Arginine 19 contributes to the GTP binding site. The [4Fe-4S] cluster site is built by cysteine 26 and cysteine 30. Position 32 (tyrosine 32) interacts with S-adenosyl-L-methionine. Cysteine 33 is a [4Fe-4S] cluster binding site. Arginine 65 provides a ligand contact to GTP. Glycine 69 is an S-adenosyl-L-methionine binding site. Residue threonine 98 participates in GTP binding. Serine 123 is a binding site for S-adenosyl-L-methionine. Lysine 172 provides a ligand contact to GTP. Position 206 (methionine 206) interacts with S-adenosyl-L-methionine. 2 residues coordinate [4Fe-4S] cluster: cysteine 269 and cysteine 272. 274-276 is a GTP binding site; sequence RIR. Residue cysteine 286 participates in [4Fe-4S] cluster binding.

This sequence belongs to the radical SAM superfamily. MoaA family. Monomer and homodimer. The cofactor is [4Fe-4S] cluster.

The catalysed reaction is GTP + AH2 + S-adenosyl-L-methionine = (8S)-3',8-cyclo-7,8-dihydroguanosine 5'-triphosphate + 5'-deoxyadenosine + L-methionine + A + H(+). Its pathway is cofactor biosynthesis; molybdopterin biosynthesis. In terms of biological role, catalyzes the cyclization of GTP to (8S)-3',8-cyclo-7,8-dihydroguanosine 5'-triphosphate. This chain is GTP 3',8-cyclase, found in Synechococcus sp. (strain CC9902).